The chain runs to 59 residues: uncharacterized protein (59 aa).

This is an uncharacterized protein from Haemophilus influenzae (strain ATCC 51907 / DSM 11121 / KW20 / Rd).